We begin with the raw amino-acid sequence, 472 residues long: L-fuculokinase (472 aa).

This sequence belongs to the FGGY kinase family. A divalent metal cation serves as cofactor.

It catalyses the reaction L-fuculose + ATP = L-fuculose 1-phosphate + ADP + H(+). Its pathway is carbohydrate degradation; L-fucose degradation; L-lactaldehyde and glycerone phosphate from L-fucose: step 2/3. Its function is as follows. Catalyzes the phosphorylation of L-fuculose. The sequence is that of L-fuculokinase from Escherichia coli O157:H7.